Reading from the N-terminus, the 205-residue chain is Holliday junction branch migration complex subunit RuvA (205 aa).

The domain I stretch occupies residues 1-68 (MIGYLEGTLL…QPKPVLIGFN (68 aa)). Residues 69-146 (TEEEKDFFHL…RFADAGHSSA (78 aa)) are domain II. The tract at residues 147 to 151 (PDVPV) is flexible linker. Residues 152-205 (TGSLADQTVEVLVGQLGYKPNEARLMVAGALKRNPDVSTPEALFDEIFKHGQAQ) are domain III.

The protein belongs to the RuvA family. Homotetramer. Forms an RuvA(8)-RuvB(12)-Holliday junction (HJ) complex. HJ DNA is sandwiched between 2 RuvA tetramers; dsDNA enters through RuvA and exits via RuvB. An RuvB hexamer assembles on each DNA strand where it exits the tetramer. Each RuvB hexamer is contacted by two RuvA subunits (via domain III) on 2 adjacent RuvB subunits; this complex drives branch migration. In the full resolvosome a probable DNA-RuvA(4)-RuvB(12)-RuvC(2) complex forms which resolves the HJ.

The protein resides in the cytoplasm. Functionally, the RuvA-RuvB-RuvC complex processes Holliday junction (HJ) DNA during genetic recombination and DNA repair, while the RuvA-RuvB complex plays an important role in the rescue of blocked DNA replication forks via replication fork reversal (RFR). RuvA specifically binds to HJ cruciform DNA, conferring on it an open structure. The RuvB hexamer acts as an ATP-dependent pump, pulling dsDNA into and through the RuvAB complex. HJ branch migration allows RuvC to scan DNA until it finds its consensus sequence, where it cleaves and resolves the cruciform DNA. This Desulfosudis oleivorans (strain DSM 6200 / JCM 39069 / Hxd3) (Desulfococcus oleovorans) protein is Holliday junction branch migration complex subunit RuvA.